Consider the following 310-residue polypeptide: Protein RL1 (310 aa).

Positions 1 to 12 are enriched in polar residues; it reads MPATDTNSTHTT. The tract at residues 1–44 is disordered; sequence MPATDTNSTHTTPLHPEDQHTLPLHHSTTQPHVQTSDKHADKQH. Over residues 35–44 the composition is skewed to basic and acidic residues; it reads TSDKHADKQH. The interval 153-159 is involved in the interaction with host DDB1; the sequence is LLLARQR. A disordered region spans residues 205-252; it reads ERPSAGEAQARGLLPRIRITPISTSPRPKPPQPTTSTASHPHATARPD. A compositionally biased stretch (low complexity) spans 238–248; sequence TTSTASHPHAT.

This sequence belongs to the HHV-5 HKLF1 family. As to quaternary structure, interacts with host adaptor protein DDB1; this interaction allows RL1 to recruit the cullin4-RING E3 ubiquitin ligase (CRL4) complex and promote SLN11 degradation.

Functionally, degrades the host antiviral factor SLFN11 via the cullin4-RING E3 ubiquitin ligase (CRL4) complex. The protein is Protein RL1 (RL1) of Human cytomegalovirus (strain Merlin) (HHV-5).